Consider the following 225-residue polypeptide: Biosynthetic peptidoglycan transglycosylase (225 aa).

A helical transmembrane segment spans residues 9–29 (LLIFIGAILLIQLWIFSSLVW).

It belongs to the glycosyltransferase 51 family.

It localises to the cell inner membrane. The catalysed reaction is [GlcNAc-(1-&gt;4)-Mur2Ac(oyl-L-Ala-gamma-D-Glu-L-Lys-D-Ala-D-Ala)](n)-di-trans,octa-cis-undecaprenyl diphosphate + beta-D-GlcNAc-(1-&gt;4)-Mur2Ac(oyl-L-Ala-gamma-D-Glu-L-Lys-D-Ala-D-Ala)-di-trans,octa-cis-undecaprenyl diphosphate = [GlcNAc-(1-&gt;4)-Mur2Ac(oyl-L-Ala-gamma-D-Glu-L-Lys-D-Ala-D-Ala)](n+1)-di-trans,octa-cis-undecaprenyl diphosphate + di-trans,octa-cis-undecaprenyl diphosphate + H(+). Its pathway is cell wall biogenesis; peptidoglycan biosynthesis. In terms of biological role, peptidoglycan polymerase that catalyzes glycan chain elongation from lipid-linked precursors. The sequence is that of Biosynthetic peptidoglycan transglycosylase from Acinetobacter baumannii (strain SDF).